The chain runs to 660 residues: DNA mismatch repair protein MutL (660 aa).

It belongs to the DNA mismatch repair MutL/HexB family.

Its function is as follows. This protein is involved in the repair of mismatches in DNA. It is required for dam-dependent methyl-directed DNA mismatch repair. May act as a 'molecular matchmaker', a protein that promotes the formation of a stable complex between two or more DNA-binding proteins in an ATP-dependent manner without itself being part of a final effector complex. This chain is DNA mismatch repair protein MutL, found in Streptococcus equi subsp. equi (strain 4047).